The sequence spans 242 residues: 1-(5-phosphoribosyl)-5-[(5-phosphoribosylamino)methylideneamino] imidazole-4-carboxamide isomerase (242 aa).

The Proton acceptor role is filled by aspartate 8. The active-site Proton donor is the aspartate 130.

It belongs to the HisA/HisF family.

Its subcellular location is the cytoplasm. It carries out the reaction 1-(5-phospho-beta-D-ribosyl)-5-[(5-phospho-beta-D-ribosylamino)methylideneamino]imidazole-4-carboxamide = 5-[(5-phospho-1-deoxy-D-ribulos-1-ylimino)methylamino]-1-(5-phospho-beta-D-ribosyl)imidazole-4-carboxamide. The protein operates within amino-acid biosynthesis; L-histidine biosynthesis; L-histidine from 5-phospho-alpha-D-ribose 1-diphosphate: step 4/9. The polypeptide is 1-(5-phosphoribosyl)-5-[(5-phosphoribosylamino)methylideneamino] imidazole-4-carboxamide isomerase (Acidithiobacillus ferrooxidans (strain ATCC 53993 / BNL-5-31) (Leptospirillum ferrooxidans (ATCC 53993))).